Reading from the N-terminus, the 1153-residue chain is Protein unc-13 homolog 4B (1153 aa).

Residues 54–84 (VLKSSLAPLEENGSGGEEDSDESPDGTLQLS) form a disordered region. One can recognise a C2 1 domain in the interval 162 to 288 (ATHEEIYEAA…MKEIAVTASS (127 aa)). Positions 195, 201, 252, 253, and 254 each coordinate Ca(2+). The MHD1 domain occupies 637–755 (FEVYLILKRY…RCCIFYAQQM (119 aa)). The region spanning 869–975 (SNSMDQLMMY…LETSDLIHQY (107 aa)) is the MHD2 domain. A C2 2 domain is found at 990–1114 (PYGQLTITAQ…EATPPGEQIM (125 aa)). Asp1019, Asp1025, Asp1083, and Asp1085 together coordinate Ca(2+).

It belongs to the unc-13 family. Interacts with Cam. The cofactor is Ca(2+).

It is found in the cytoplasm. The protein resides in the cytoskeleton. The protein localises to the cell projection. Its subcellular location is the filopodium. It localises to the late endosome. It is found in the lysosome. Its function is as follows. Essential for tracheal development in embryos. Functions with the GTPase Rab39 and downstream of dnd, to regulate lumen fusion between previously separate tracheal branches (anastomosis). Essential component of secretory lysosome-related organelles (SLs) that are present in the tracheal fusion tip cells (FCs). Mediates intracellular fusion of the extending tracheal stalk cell lumen in the FCs by recruiting the SNARE complex component Syx1A to the SLs, this may then enable the SLs to interact with complementary SNAREs (such as Syb) present in the apical membrane of the FC-FC interface and the membranes of the separate tracheal stalk cells. May also function in the maturation and exocytosis of the SLs. The chain is Protein unc-13 homolog 4B from Drosophila melanogaster (Fruit fly).